The following is a 475-amino-acid chain: C3a anaphylatoxin chemotactic receptor (475 aa).

The Extracellular segment spans residues 1–23; it reads MESSSAETNSTGLHLEPQYQPET. N-linked (GlcNAc...) asparagine glycosylation is present at Asn-9. The chain crosses the membrane as a helical span at residues 24–46; sequence ILAMAILGLTFVLGLPGNGLVLW. Over 47–57 the chain is Cytoplasmic; the sequence is VAGLKMRRTVN. A helical transmembrane segment spans residues 58–80; sequence TVWFLHLTVADFVCCLSLPFSMA. The Extracellular portion of the chain corresponds to 81-96; sequence HLALRGYWPYGEILCK. Cys-95 and Cys-172 are joined by a disulfide. The chain crosses the membrane as a helical span at residues 97 to 118; that stretch reads FIPTVIIFNMFASVFLLTAISL. At 119–139 the chain is on the cytoplasmic side; it reads DRCLMVLKPIWCQNHRNVRTA. Residues 140–160 traverse the membrane as a helical segment; that stretch reads CIICGCIWLVAFVLCIPVFVY. The Extracellular segment spans residues 161-331; it reads RETFTLENHT…RLLKVITFTR (171 aa). Residue Asn-168 is glycosylated (N-linked (GlcNAc...) asparagine). Residues Tyr-174 and Tyr-183 each carry the sulfotyrosine modification. Residues Asn-273 and Asn-292 are each glycosylated (N-linked (GlcNAc...) asparagine). Residues 332–351 traverse the membrane as a helical segment; it reads LVVGFLLPMIIMVACYTLII. The Cytoplasmic portion of the chain corresponds to 352–368; it reads FRMRRVRVVKSWNKALH. A helical membrane pass occupies residues 369 to 391; the sequence is LAMVVVTIFLICWAPYHVFGVLI. Over 392 to 408 the chain is Extracellular; sequence LFINPESRVGAALLSWD. A helical transmembrane segment spans residues 409-429; it reads HVSIALASANSCFNPFLYALL. Topologically, residues 430–475 are cytoplasmic; the sequence is GRDLRKRVRQSMKGILEAAFSEDISKSTSFIQAKAFSEKHSLSTNV. Position 450 is a phosphoserine (Ser-450).

It belongs to the G-protein coupled receptor 1 family. Interacts with VGF-derived peptide TLQP-21. As to expression, expressed in the heart, kidney, lung, liver, peritoneal macrophages and spleen.

The protein resides in the cell membrane. Functionally, receptor for the chemotactic and inflammatory peptide anaphylatoxin C3a. This receptor stimulates chemotaxis, granule enzyme release and superoxide anion production. In Cavia porcellus (Guinea pig), this protein is C3a anaphylatoxin chemotactic receptor (C3AR1).